A 121-amino-acid polypeptide reads, in one-letter code: Putative iron-sulfur cluster insertion protein ErpA (121 aa).

Residues Cys-49, Cys-113, and Cys-115 each contribute to the iron-sulfur cluster site.

The protein belongs to the HesB/IscA family. In terms of assembly, homodimer. Iron-sulfur cluster serves as cofactor.

In terms of biological role, required for insertion of 4Fe-4S clusters. The sequence is that of Putative iron-sulfur cluster insertion protein ErpA from Paraburkholderia phymatum (strain DSM 17167 / CIP 108236 / LMG 21445 / STM815) (Burkholderia phymatum).